Here is a 40-residue protein sequence, read N- to C-terminus: Photosystem II reaction center protein X (40 aa).

A helical transmembrane segment spans residues 10-30; it reads FFYSILFGAIVLGLLGGGFIF.

It belongs to the PsbX family. Type 1 subfamily. In terms of assembly, PSII is composed of 1 copy each of membrane proteins PsbA, PsbB, PsbC, PsbD, PsbE, PsbF, PsbH, PsbI, PsbJ, PsbK, PsbL, PsbM, PsbT, PsbX, PsbY, PsbZ, Psb30/Ycf12, peripheral proteins PsbO, CyanoQ (PsbQ), PsbU, PsbV and a large number of cofactors. It forms dimeric complexes.

It localises to the cellular thylakoid membrane. Involved in the binding and/or turnover of quinones at the Q(B) site of photosystem II (PSII). PSII is a light-driven water plastoquinone oxidoreductase, using light energy to abstract electrons from H(2)O, generating a proton gradient subsequently used for ATP formation. The polypeptide is Photosystem II reaction center protein X (Acaryochloris marina (strain MBIC 11017)).